The sequence spans 606 residues: Ribonucleoprotein PTB-binding 1 (606 aa).

The segment at 1–41 (MAADVSVTHRPPLSPKSGAEVEAGDAAERRAPEEELPPLDP) is disordered. Position 2 is an N-acetylalanine (Ala2). A phosphoserine mark is found at Ser6 and Ser14. The short motif at 45–60 (RKRLEHTERQFRNRRK) is the Nuclear localization signal element. RRM domains lie at 59 to 130 (RKIL…LQPT), 132 to 210 (ALLC…WTDA), and 221 to 299 (RCLC…FCAP). An interaction with PTBP1 region spans residues 307–395 (LAALIAAQAT…QTQGQKKPGI (89 aa)). Residues 391-474 (KKPGILGDSP…PPAPVGLRGS (84 aa)) are disordered. Low complexity predominate over residues 453-462 (LGLGPPAAQL). Thr463 carries the post-translational modification Phosphothreonine. Position 474 is a phosphoserine (Ser474). Phosphothreonine is present on Pro488. Residues 519-564 (GLLGLSPGPNGHSHLLKVRAGGGDMQGWEAPAPQRPLTRPALPSVS) form a disordered region. Residues Ser562 and His567 each carry the phosphoserine modification. Residues 579-606 (CPRPSPAQKAAMWASTPRASAATTRTPT) form a disordered region. A compositionally biased stretch (low complexity) spans 592-606 (ASTPRASAATTRTPT).

In terms of assembly, interacts with PTBP1, RAVER2, VCL and ACTN1. Part of a complex containing RAVER1, VCL and ACTN1.

It localises to the nucleus. The protein resides in the cytoplasm. Its function is as follows. Cooperates with PTBP1 to modulate regulated alternative splicing events. Promotes exon skipping. Cooperates with PTBP1 to modulate switching between mutually exclusive exons during maturation of the TPM1 pre-mRNA. The chain is Ribonucleoprotein PTB-binding 1 (RAVER1) from Homo sapiens (Human).